The chain runs to 193 residues: Probable GTP-binding protein EngB (193 aa).

An EngB-type G domain is found at 19 to 188; it reads SVKEVCFMGR…HKQIFELFKA (170 aa). GTP is bound by residues 27-34, 53-57, 70-73, 136-139, and 167-169; these read GRSNVGKS, GRTQL, DLPG, NKFD, and VSA. Mg(2+) is bound by residues S34 and T55.

Belongs to the TRAFAC class TrmE-Era-EngA-EngB-Septin-like GTPase superfamily. EngB GTPase family. The cofactor is Mg(2+).

In terms of biological role, necessary for normal cell division and for the maintenance of normal septation. The polypeptide is Probable GTP-binding protein EngB (Mycoplasma pneumoniae (strain ATCC 29342 / M129 / Subtype 1) (Mycoplasmoides pneumoniae)).